The following is a 417-amino-acid chain: RH-like protein IA (417 aa).

The next 11 membrane-spanning stretches (helical) occupy residues 12–32 (CLPLCALTLEAALILLFYFFT), 44–64 (LVASYQVGQDLTVMAAIGFGF), 77–97 (VAFSLFMLALGVQWAILLDGF), 125–145 (ISVDAVLGKVNLVQLVVMVLV), 172–192 (IYVFAAYFGLSVAWCLPKPLP), 203–223 (TIPSLSAMLGALFLWMFWPSF), 238–258 (VFNTYYAVAVSVVTAISGSSL), 265–285 (ISMSYMHNAVLAGGVAVGTSC), 287–307 (LITSPWLAMVLGLVAGLISIG), 331–351 (NFSLLGLLGEIIYIVLLVHHT), and 358–378 (MIGFQVLLRIGEFSLATTIAL).

Belongs to the ammonium transporter (TC 2.A.49) family. Rh subfamily.

The protein localises to the membrane. Functionally, may be part of an oligomeric complex which is likely to have a transport or channel function in the erythrocyte membrane. The sequence is that of RH-like protein IA from Pan troglodytes (Chimpanzee).